The following is a 219-amino-acid chain: Guanylate kinase (219 aa).

The 180-residue stretch at 15–194 folds into the Guanylate kinase-like domain; the sequence is GLMFVLSSPS…AFESVKAILR (180 aa). 22 to 29 contacts ATP; it reads SPSGAGKT.

It belongs to the guanylate kinase family.

The protein resides in the cytoplasm. The enzyme catalyses GMP + ATP = GDP + ADP. Functionally, essential for recycling GMP and indirectly, cGMP. The protein is Guanylate kinase of Rhodopseudomonas palustris (strain BisB5).